The chain runs to 445 residues: E3 ubiquitin-protein ligase MYLIP (445 aa).

Residues 1–279 form the FERM domain; the sequence is MLCYVTRPDA…ETHAFYRCDT (279 aa). Residues 341–363 are disordered; the sequence is RNDQSPPSSPLKSSDSSMSCSSC. A compositionally biased stretch (low complexity) spans 350-363; sequence PLKSSDSSMSCSSC. Residues Cys360, Cys363, and Cys368 each contribute to the Fe cation site. Residues 387–422 form an RING-type zinc finger; that stretch reads CMVCCEEEINSTFCPCGHTVCCESCAAQLQSCPVCR. The interval 431–433 is critical for homodimerization; it reads VYL.

In terms of assembly, homodimer. Interacts with the E2 ubiquitin-conjugating enzyme, UBE2D1 (via RING-type zinc finger). Interacts with myosin regulatory light chain (MRLC) and TMEM4. Post-translationally, autoubiquitinated. In terms of tissue distribution, expressed in developing and adult brain, hippocampus, cerebellum, cerebral cortex, thalamus and substantia nigra. Predominantly found in neurons.

It localises to the cytoplasm. The protein resides in the cell membrane. It catalyses the reaction S-ubiquitinyl-[E2 ubiquitin-conjugating enzyme]-L-cysteine + [acceptor protein]-L-lysine = [E2 ubiquitin-conjugating enzyme]-L-cysteine + N(6)-ubiquitinyl-[acceptor protein]-L-lysine.. Its pathway is protein modification; protein ubiquitination. Its activity is regulated as follows. Can bind 1 iron ion per dimer. Iron binding seems to decrease LDLR degradation activity. Functionally, E3 ubiquitin-protein ligase that mediates ubiquitination and subsequent proteasomal degradation of myosin regulatory light chain (MRLC), LDLR, VLDLR and LRP8. Activity depends on E2 enzymes of the UBE2D family. Proteasomal degradation of MRLC leads to inhibit neurite outgrowth in presence of NGF by counteracting the stabilization of MRLC by saposin-like protein (CNPY2/MSAP) and reducing CNPY2-stimulated neurite outgrowth. Acts as a sterol-dependent inhibitor of cellular cholesterol uptake by mediating ubiquitination and subsequent degradation of LDLR. This Rattus norvegicus (Rat) protein is E3 ubiquitin-protein ligase MYLIP (Mylip).